Consider the following 761-residue polypeptide: Phosphoribosylformylglycinamidine synthase subunit PurL (761 aa).

Residue histidine 49 is part of the active site. ATP is bound by residues tyrosine 52 and lysine 92. Residue glutamate 94 participates in Mg(2+) binding. Substrate is bound by residues 95–98 (SHNH) and arginine 117. The Proton acceptor role is filled by histidine 96. Aspartate 118 contacts Mg(2+). Glutamine 241 serves as a coordination point for substrate. Aspartate 269 serves as a coordination point for Mg(2+). Residue 318-320 (ESQ) participates in substrate binding. The ATP site is built by asparagine 502 and glycine 539. Asparagine 540 lines the Mg(2+) pocket. Serine 542 provides a ligand contact to substrate.

The protein belongs to the FGAMS family. In terms of assembly, monomer. Part of the FGAM synthase complex composed of 1 PurL, 1 PurQ and 2 PurS subunits.

The protein localises to the cytoplasm. It catalyses the reaction N(2)-formyl-N(1)-(5-phospho-beta-D-ribosyl)glycinamide + L-glutamine + ATP + H2O = 2-formamido-N(1)-(5-O-phospho-beta-D-ribosyl)acetamidine + L-glutamate + ADP + phosphate + H(+). It functions in the pathway purine metabolism; IMP biosynthesis via de novo pathway; 5-amino-1-(5-phospho-D-ribosyl)imidazole from N(2)-formyl-N(1)-(5-phospho-D-ribosyl)glycinamide: step 1/2. Part of the phosphoribosylformylglycinamidine synthase complex involved in the purines biosynthetic pathway. Catalyzes the ATP-dependent conversion of formylglycinamide ribonucleotide (FGAR) and glutamine to yield formylglycinamidine ribonucleotide (FGAM) and glutamate. The FGAM synthase complex is composed of three subunits. PurQ produces an ammonia molecule by converting glutamine to glutamate. PurL transfers the ammonia molecule to FGAR to form FGAM in an ATP-dependent manner. PurS interacts with PurQ and PurL and is thought to assist in the transfer of the ammonia molecule from PurQ to PurL. The sequence is that of Phosphoribosylformylglycinamidine synthase subunit PurL from Chlorobium luteolum (strain DSM 273 / BCRC 81028 / 2530) (Pelodictyon luteolum).